The following is a 1030-amino-acid chain: MMS19 nucleotide excision repair protein homolog (1030 aa).

A2 carries the N-acetylalanine modification. 4 HEAT repeats span residues 866–904, 908–946, 949–987, and 990–1028; these read QRFF…RLPK, LPEL…EAPQ, SLHV…LPTP, and LPYK…LGSP. Position 1027 is a phosphoserine (S1027).

It belongs to the MET18/MMS19 family. As to quaternary structure, component of the CIA complex. In the CIA complex, interacts directly with CIAO2B and CIAO3. Component of the MMXD complex, composed of CIAO1, ERCC2, CIAO2B, MMS19 and SLC25A5. Interacts with CIAO2B; the interaction is direct. Interacts with ERCC2/XPD; the interaction is direct. Interacts with ERCC3/XPB and NCOA3/RAC3. Interacts with RTEL1; the interaction mediates the association of RTEL1 with the CIA complex. Interacts with BRIP1. Interacts with KIF4A; the interaction facilitates the transfer of Fe-S clusters to KIF4A to ensure proper localization of KIF4A to the mitotic machinery components. Interacts with CCDC117; the interaction is indirect. In terms of processing, ubiquitinated; undergoes 'Lys-48'-linked polyubiquitination.

Its subcellular location is the nucleus. The protein localises to the cytoplasm. It is found in the cytoskeleton. It localises to the spindle. Key component of the cytosolic iron-sulfur protein assembly (CIA) complex, a multiprotein complex that mediates the incorporation of iron-sulfur cluster into apoproteins specifically involved in DNA metabolism and genomic integrity. In the CIA complex, MMS19 acts as an adapter between early-acting CIA components and a subset of cellular target Fe/S proteins such as ERCC2/XPD, FANCJ and RTEL1, thereby playing a key role in nucleotide excision repair (NER), homologous recombination-mediated double-strand break DNA repair, DNA replication and RNA polymerase II (POL II) transcription. As a CIA complex component and in collaboration with CIAO1 and CIAO2, binds to and facilitates the assembly of most cytosolic-nuclear Fe/S proteins. As part of the mitotic spindle-associated MMXD complex, plays a role in chromosome segregation, probably by facilitating iron-sulfur cluster assembly into ERCC2/XPD. Together with CIAO2, facilitates the transfer of Fe-S clusters to the motor protein KIF4A, which ensures proper localization of KIF4A to mitotic machinery components to promote the progression of mitosis. Indirectly acts as a transcriptional coactivator of estrogen receptor (ER), via its role in iron-sulfur insertion into some component of the TFIIH-machinery. In Bos taurus (Bovine), this protein is MMS19 nucleotide excision repair protein homolog.